The following is a 77-amino-acid chain: Acyl carrier protein homolog (77 aa).

The Carrier domain maps to 1–76; sequence MSINIKDLIM…DLINAFEDVL (76 aa). Position 36 is an O-(pantetheine 4'-phosphoryl)serine (Ser-36).

Post-translationally, 4'-phosphopantetheine is transferred from CoA to a specific serine of the apo-ACP-like protein.

It functions in the pathway lipid metabolism; fatty acid biosynthesis. Functionally, carrier of the growing fatty acid chain in fatty acid biosynthesis. This Ureaplasma parvum serovar 3 (strain ATCC 700970) protein is Acyl carrier protein homolog.